The chain runs to 1639 residues: RIMS-binding protein 3B (1639 aa).

3 disordered regions span residues 1–22 (MAKD…SSPA), 215–240 (GSPD…CHAP), and 295–364 (SLDS…LTPS). Positions 21–143 (PAAAVLENQR…ELQRQLAEEL (123 aa)) form a coiled coil. The span at 326–339 (SPPPSPLPPPPPPS) shows a compositional bias: pro residues. Coiled-coil stretches lie at residues 409–442 (QADE…QETN) and 480–619 (LAKD…AEEN). Residues 697 to 811 (CRPGHPPEQP…DRDTASEVDD (115 aa)) form a disordered region. 2 stretches are compositionally biased toward polar residues: residues 707 to 718 (WETSQMPESQVK) and 761 to 775 (SVPQ…SQPL). The segment covering 776 to 790 (SKKTSSQSNSSSEGS) has biased composition (low complexity). Positions 832–899 (PKLKIFMAQY…PSNFVEQIPD (68 aa)) constitute an SH3 1 domain. Fibronectin type-III domains are found at residues 995-1083 (APMQ…TLLA) and 1088-1184 (PPLE…IPED). Disordered stretches follow at residues 1251-1273 (PRRQ…GAGS), 1292-1325 (QKSP…SPAP), and 1392-1413 (GTER…QALG). Positions 1293–1305 (KSPQNHRPPSVSD) are enriched in polar residues. The span at 1392-1406 (GTERREERREPEPHS) shows a compositional bias: basic and acidic residues. 2 SH3 domains span residues 1452 to 1520 (TPAR…EMEV) and 1569 to 1636 (WTPK…HMSL).

The protein belongs to the RIMBP family. Interacts with LRGUK (via guanylate kinase-like domain). Interacts (via C-terminus) with HOOK1 (via coiled-coil region).

The protein localises to the cytoplasm. It localises to the cytoskeleton. Functionally, probable component of the manchette, a microtubule-based structure which plays a key role in sperm head morphogenesis during late stages of sperm development. This chain is RIMS-binding protein 3B (RIMBP3B), found in Homo sapiens (Human).